The sequence spans 92 residues: Small ribosomal subunit protein uS19c (92 aa).

This sequence belongs to the universal ribosomal protein uS19 family. In terms of assembly, component of the chloroplast small ribosomal subunit (SSU). Mature 70S chloroplast ribosomes of higher plants consist of a small (30S) and a large (50S) subunit. The 30S small subunit contains 1 molecule of ribosomal RNA (16S rRNA) and 24 different proteins. The 50S large subunit contains 3 rRNA molecules (23S, 5S and 4.5S rRNA) and 33 different proteins. uS19c binds directly to 16S ribosomal RNA.

Its subcellular location is the plastid. It is found in the chloroplast. In terms of biological role, component of the chloroplast ribosome (chloro-ribosome), a dedicated translation machinery responsible for the synthesis of chloroplast genome-encoded proteins, including proteins of the transcription and translation machinery and components of the photosynthetic apparatus. This is Small ribosomal subunit protein uS19c (rps19) from Spinacia oleracea (Spinach).